The chain runs to 430 residues: Serine--tRNA ligase (430 aa).

The span at 45-58 shows a compositional bias: polar residues; sequence ENLQAERNSRSKSI. The tract at residues 45–65 is disordered; the sequence is ENLQAERNSRSKSIGQAKARG. An L-serine-binding site is contributed by 237-239; it reads TSE. 268 to 270 is a binding site for ATP; it reads RSE. E291 is a binding site for L-serine. An ATP-binding site is contributed by 355-358; that stretch reads EISS. L-serine is bound at residue S391.

This sequence belongs to the class-II aminoacyl-tRNA synthetase family. Type-1 seryl-tRNA synthetase subfamily. Homodimer. The tRNA molecule binds across the dimer.

Its subcellular location is the cytoplasm. It catalyses the reaction tRNA(Ser) + L-serine + ATP = L-seryl-tRNA(Ser) + AMP + diphosphate + H(+). It carries out the reaction tRNA(Sec) + L-serine + ATP = L-seryl-tRNA(Sec) + AMP + diphosphate + H(+). It functions in the pathway aminoacyl-tRNA biosynthesis; selenocysteinyl-tRNA(Sec) biosynthesis; L-seryl-tRNA(Sec) from L-serine and tRNA(Sec): step 1/1. Functionally, catalyzes the attachment of serine to tRNA(Ser). Is also able to aminoacylate tRNA(Sec) with serine, to form the misacylated tRNA L-seryl-tRNA(Sec), which will be further converted into selenocysteinyl-tRNA(Sec). This is Serine--tRNA ligase from Erwinia tasmaniensis (strain DSM 17950 / CFBP 7177 / CIP 109463 / NCPPB 4357 / Et1/99).